A 249-amino-acid chain; its full sequence is Putative ABC transporter ATP-binding protein GSU1281 (249 aa).

Residues 6–236 enclose the ABC transporter domain; it reads VEVRDLCHCY…DELLATCRLE (231 aa). Position 39 to 46 (39 to 46) interacts with ATP; it reads GANGAGKS.

This sequence belongs to the ABC transporter superfamily.

It localises to the cell inner membrane. Functionally, probably part of an ABC transporter complex. Responsible for energy coupling to the transport system. The chain is Putative ABC transporter ATP-binding protein GSU1281 from Geobacter sulfurreducens (strain ATCC 51573 / DSM 12127 / PCA).